Here is a 224-residue protein sequence, read N- to C-terminus: UPF0758 protein lmo1549 (224 aa).

Positions 102-224 (VVRCPEDAVK…YISLKEKGYF (123 aa)) constitute an MPN domain. Residues H173, H175, and D186 each coordinate Zn(2+). A JAMM motif motif is present at residues 173–186 (HNHPSGDPTPSSED).

Belongs to the UPF0758 family.

This is UPF0758 protein lmo1549 from Listeria monocytogenes serovar 1/2a (strain ATCC BAA-679 / EGD-e).